The chain runs to 343 residues: Fructose-1,6-bisphosphatase class 1 (343 aa).

Mg(2+)-binding residues include Glu-99, Asp-121, Leu-123, and Asp-124. Residues 124–127, Asn-218, Tyr-250, and Lys-283 each bind substrate; that span reads DGSS. Position 289 (Glu-289) interacts with Mg(2+).

The protein belongs to the FBPase class 1 family. In terms of assembly, homotetramer. Requires Mg(2+) as cofactor.

The protein resides in the cytoplasm. It carries out the reaction beta-D-fructose 1,6-bisphosphate + H2O = beta-D-fructose 6-phosphate + phosphate. Its pathway is carbohydrate biosynthesis; gluconeogenesis. The polypeptide is Fructose-1,6-bisphosphatase class 1 (Leptospira biflexa serovar Patoc (strain Patoc 1 / Ames)).